Consider the following 681-residue polypeptide: Auxin response factor 8 (681 aa).

Residues 120–222 constitute a DNA-binding region (TF-B3); sequence FAKTLTQSDA…DLHVGIRRAK (103 aa). Disordered stretches follow at residues 474-518 and 534-577; these read LRRP…AKPP and SLSG…TSSE. Composition is skewed to polar residues over residues 534-555 and 564-577; these read SLSGTTSPAATGNSSLNWNTEK and GVIQNSPTDNTSSE. The 81-residue stretch at 595–675 folds into the PB1 domain; sequence PGQCKVFIES…RRLTILTDAG (81 aa).

The protein belongs to the ARF family. Homodimers and heterodimers. In terms of tissue distribution, expressed in roots, culms, leaves and young panicles.

The protein resides in the nucleus. Its function is as follows. Auxin response factors (ARFs) are transcriptional factors that bind specifically to the DNA sequence 5'-TGTCTC-3' found in the auxin-responsive promoter elements (AuxREs). The sequence is that of Auxin response factor 8 (ARF8) from Oryza sativa subsp. japonica (Rice).